The chain runs to 644 residues: Sodium/hydrogen exchanger 9 (644 aa).

Residues 1 to 20 (MERQRRFMSEKDEYQFQHQG) lie on the Lumenal side of the membrane. Residues 21 to 41 (AVELLVFNFLLILTILTIWLF) traverse the membrane as a helical segment. Residues 42 to 45 (KNHR) lie on the Cytoplasmic side of the membrane. Residues 46–66 (FRFLHETGGAMVYGLIMGLIL) form a helical membrane-spanning segment. The Lumenal portion of the chain corresponds to 67–126 (RYATAPTDIESGTVYDCGKLAFSPSTLLINITDQVYEYKYKREISQHNINPHLGNAILEK). A helical transmembrane segment spans residues 127–147 (MTFDPEIFFNVLLPPIIFHAG). The Cytoplasmic segment spans residues 148–164 (YSLKKRHFFQNLGSILT). Residues 165–185 (YAFLGTAISCIVIGLIMYGFV) traverse the membrane as a helical segment. Residues 186 to 203 (KAMVYAGQLKNGDFHFTD) are Lumenal-facing. Residues 204–224 (CLFFGSLMSATDPVTVLAIFH) traverse the membrane as a helical segment. The Cytoplasmic segment spans residues 225–235 (ELHVDPDLYTL). The chain crosses the membrane as a helical span at residues 236 to 256 (LFGESVLNDAVAIVLTYSISI). Topologically, residues 257–277 (YSPKENPNAFDAAAFFQSVGN) are lumenal. A helical transmembrane segment spans residues 278 to 298 (FLGIFAGSFAMGSAYAVVTAL). Topologically, residues 299-301 (LTK) are cytoplasmic. A run of 2 helical transmembrane segments spans residues 302 to 322 (FTKLCEFPMLETGLFFLLSWS) and 323 to 343 (AFLSAEAAGLTGIVAVLFCGV). At 344–364 (TQAHYTYNNLSLDSKMRTKQL) the chain is on the cytoplasmic side. The chain crosses the membrane as a helical span at residues 365–385 (FEFMNFLAENVIFCYMGLALF). A topological domain (lumenal) is located at residue T386. The chain crosses the membrane as a helical span at residues 387–407 (FQNHIFNALFILGAFLAIFVA). At 408–429 (RACNIYPLSFLLNLGRKHKIPW) the chain is on the cytoplasmic side. The chain crosses the membrane as a helical span at residues 430–450 (NFQHMMMFSGLRGAIAFALAI). The Lumenal portion of the chain corresponds to 451-465 (RDTESQPKQMMFSTT). A helical transmembrane segment spans residues 466 to 486 (LLLVFFTVWVFGGGTTPMLTW). The Cytoplasmic portion of the chain corresponds to 487–644 (LQIRVGVDLD…EQTPGQSQLN (158 aa)). Residues 593-622 (QAASPCSPPTRLGLDQKAAPQTPGKENIYE) form a disordered region.

The protein belongs to the monovalent cation:proton antiporter 1 (CPA1) transporter (TC 2.A.36) family. Homodimer; phosphatidylinositol-4,5-bisphosphate (PIP2) and phosphatidylinositol 3,4,5-trisphosphate (PIP3) could be involved in the dimer stabilization. Interacts (via the C-terminus) with RACK1. Interacts with CHP1.

It is found in the late endosome membrane. It localises to the early endosome membrane. The protein resides in the recycling endosome membrane. The protein localises to the cell membrane. Its subcellular location is the cytoplasmic vesicle. It is found in the phagosome membrane. It carries out the reaction Na(+)(in) + H(+)(out) = Na(+)(out) + H(+)(in). The catalysed reaction is K(+)(in) + H(+)(out) = K(+)(out) + H(+)(in). Endosomal Na(+), K(+)/H(+) antiporter. Mediates the electroneutral exchange of endosomal luminal H(+) for a cytosolic Na(+) or K(+). By facilitating proton efflux, SLC9A9 counteracts the acidity generated by vacuolar (V)-ATPase, thereby limiting luminal acidification. Regulates organellar pH and consequently, endosome maturation and endocytic trafficking of plasma membrane receptors and neurotransporters. Promotes the recycling of transferrin receptors back to the cell surface to facilitate additional iron uptake in the brain. Regulates synaptic transmission by regulating the luminal pH of axonal endosomes. Regulates phagosome lumenal pH, thus affecting phagosome maturation, and consequently, microbicidal activity in macrophages. Can also be active at the cell surface of specialized cells, e.g., in the inner ear hair bundles uses the high K(+) of the endolymph to regulate intracelular pH. The polypeptide is Sodium/hydrogen exchanger 9 (SLC9A9) (Equus caballus (Horse)).